A 202-amino-acid chain; its full sequence is Putative NADH dehydrogenase/NAD(P)H nitroreductase SCO7141 (202 aa).

The protein belongs to the nitroreductase family. HadB/RutE subfamily. FMN is required as a cofactor.

The polypeptide is Putative NADH dehydrogenase/NAD(P)H nitroreductase SCO7141 (Streptomyces coelicolor (strain ATCC BAA-471 / A3(2) / M145)).